We begin with the raw amino-acid sequence, 352 residues long: Holliday junction branch migration complex subunit RuvB (352 aa).

The interval 4-191 (TDKLAAPARV…FGIVARLEFY (188 aa)) is large ATPase domain (RuvB-L). Residues L30, R31, G72, K75, T76, T77, 138 to 140 (EDY), R181, Y191, and R228 contribute to the ATP site. A Mg(2+)-binding site is contributed by T76. Residues 192 to 262 (TADELARIVT…MADAALAMLD (71 aa)) form a small ATPAse domain (RuvB-S) region. The head domain (RuvB-H) stretch occupies residues 265 to 352 (SVGFDLMDRK…SGASELFGDA (88 aa)). DNA-binding residues include R301, R320, and R325.

The protein belongs to the RuvB family. In terms of assembly, homohexamer. Forms an RuvA(8)-RuvB(12)-Holliday junction (HJ) complex. HJ DNA is sandwiched between 2 RuvA tetramers; dsDNA enters through RuvA and exits via RuvB. An RuvB hexamer assembles on each DNA strand where it exits the tetramer. Each RuvB hexamer is contacted by two RuvA subunits (via domain III) on 2 adjacent RuvB subunits; this complex drives branch migration. In the full resolvosome a probable DNA-RuvA(4)-RuvB(12)-RuvC(2) complex forms which resolves the HJ.

Its subcellular location is the cytoplasm. The catalysed reaction is ATP + H2O = ADP + phosphate + H(+). Its function is as follows. The RuvA-RuvB-RuvC complex processes Holliday junction (HJ) DNA during genetic recombination and DNA repair, while the RuvA-RuvB complex plays an important role in the rescue of blocked DNA replication forks via replication fork reversal (RFR). RuvA specifically binds to HJ cruciform DNA, conferring on it an open structure. The RuvB hexamer acts as an ATP-dependent pump, pulling dsDNA into and through the RuvAB complex. RuvB forms 2 homohexamers on either side of HJ DNA bound by 1 or 2 RuvA tetramers; 4 subunits per hexamer contact DNA at a time. Coordinated motions by a converter formed by DNA-disengaged RuvB subunits stimulates ATP hydrolysis and nucleotide exchange. Immobilization of the converter enables RuvB to convert the ATP-contained energy into a lever motion, pulling 2 nucleotides of DNA out of the RuvA tetramer per ATP hydrolyzed, thus driving DNA branch migration. The RuvB motors rotate together with the DNA substrate, which together with the progressing nucleotide cycle form the mechanistic basis for DNA recombination by continuous HJ branch migration. Branch migration allows RuvC to scan DNA until it finds its consensus sequence, where it cleaves and resolves cruciform DNA. This chain is Holliday junction branch migration complex subunit RuvB, found in Cupriavidus necator (strain ATCC 17699 / DSM 428 / KCTC 22496 / NCIMB 10442 / H16 / Stanier 337) (Ralstonia eutropha).